A 708-amino-acid chain; its full sequence is Kin of IRRE-like protein 2 (708 aa).

An N-terminal signal peptide occupies residues Met1–Ala20. Topologically, residues Gly21–Arg510 are extracellular. 5 consecutive Ig-like C2-type domains span residues Pro24–His118, Pro123–Ser222, Pro227–Asp307, Pro312–Thr394, and Pro398–Gly501. A disulfide bond links Cys45 and Cys103. Residue Asn143 is glycosylated (N-linked (GlcNAc...) asparagine). Cystine bridges form between Cys146/Cys204 and Cys248/Cys291. The Cell attachment site signature appears at Arg149–Asp151. N-linked (GlcNAc...) asparagine glycosylation occurs at Asn301. 2 disulfides stabilise this stretch: Cys333–Cys375 and Cys419–Cys485. A glycan (N-linked (GlcNAc...) asparagine) is linked at Asn484. Residues Ile511–Leu531 traverse the membrane as a helical segment. The Cytoplasmic segment spans residues Cys532–Val708. The interval Glu545 to Asn601 is disordered. The segment covering Pro553–Arg562 has biased composition (low complexity). Residues Thr569–Leu586 are compositionally biased toward basic and acidic residues. A Phosphoserine modification is found at Ser571. 3 positions are modified to phosphotyrosine: Tyr603, Tyr604, and Tyr661. Residues Leu684–Val708 form a disordered region.

The protein belongs to the immunoglobulin superfamily. As to quaternary structure, homodimer. Interacts with NPHS2/podocin (via the C-terminus). Interacts with NPHS1 (via the Ig-like domains). Interacts with FYN. Post-translationally, N-glycosylated. In terms of processing, the extracellular domain is cleaved leading to the generation of a soluble fragment and a membrane-bound C-terminal fragment, which is further cleaved by gamma-secretase. As to expression, highly expressed in beta-cells of the pancreatic islets.

Its subcellular location is the cell membrane. Functionally, may regulate basal insulin secretion. The sequence is that of Kin of IRRE-like protein 2 (KIRREL2) from Homo sapiens (Human).